Here is a 287-residue protein sequence, read N- to C-terminus: MRFIHALLLAGIAHSAYASEKLTFKTDLEKLEREKAAQIGVAIVDPQGEIVAGHRMAQRFAMCSTFKFPLAALVFERIDSGTERGDRKLSYGPDMIVEWSPATERFLASGHMTVLEAAQAAVQLSDNGATNLLLREIGGPAAMTQYFRKIGDSVSRLDRKEPEMSDNTPGDLRDTTTPIAMARTVAKVLYGGALTSTSTHTIERWLIGNQTGDATLRAGFPKDWVVGEKTGTCANGGRNDIGFFKAQERDYAVAVYTTAPKLSAVERDELVASVGQVITQLILSTDK.

Residues Met1–Ala18 form the signal peptide. Cys63 and Cys233 form a disulfide bridge. Ser64 serves as the catalytic Nucleophile; acyl-ester intermediate. Imipenem-binding residues include Ser64, Ser125, Asn127, Thr230, Thr232, and Arg238.

It belongs to the class-A beta-lactamase family.

The protein resides in the secreted. The enzyme catalyses a beta-lactam + H2O = a substituted beta-amino acid. With respect to regulation, inhibited by the beta-lactamase-blocking agents clavulanic acid, sulbactam and tazobactam, via a covalent binding to Ser-64. Functionally, confers resistance to penicillins, cephalosporins and carbapenems. Has carbapenem-hydrolyzing activity. The protein is Beta-lactamase GES-5 of Klebsiella pneumoniae.